The sequence spans 232 residues: Imidazoleglycerol-phosphate dehydratase (232 aa).

It belongs to the imidazoleglycerol-phosphate dehydratase family.

It carries out the reaction D-erythro-1-(imidazol-4-yl)glycerol 3-phosphate = 3-(imidazol-4-yl)-2-oxopropyl phosphate + H2O. Its pathway is amino-acid biosynthesis; L-histidine biosynthesis; L-histidine from 5-phospho-alpha-D-ribose 1-diphosphate: step 6/9. This is Imidazoleglycerol-phosphate dehydratase (HIS3) from Lachancea kluyveri (strain ATCC 58438 / CBS 3082 / BCRC 21498 / NBRC 1685 / JCM 7257 / NCYC 543 / NRRL Y-12651) (Yeast).